We begin with the raw amino-acid sequence, 240 residues long: Epoxyqueuosine reductase QueH (240 aa).

The [4Fe-4S] cluster site is built by cysteine 43, cysteine 44, cysteine 129, and cysteine 132. Cysteine 211 and cysteine 213 are disulfide-bonded.

Belongs to the QueH family.

The enzyme catalyses epoxyqueuosine(34) in tRNA + AH2 = queuosine(34) in tRNA + A + H2O. It functions in the pathway tRNA modification; tRNA-queuosine biosynthesis. Its function is as follows. Catalyzes the conversion of epoxyqueuosine (oQ) to queuosine (Q), which is a hypermodified base found in the wobble positions of tRNA(Asp), tRNA(Asn), tRNA(His) and tRNA(Tyr). This chain is Epoxyqueuosine reductase QueH, found in Staphylococcus aureus (strain Mu50 / ATCC 700699).